The primary structure comprises 324 residues: Beta-ketoacyl-[acyl-carrier-protein] synthase III (324 aa).

Active-site residues include C112 and H249. An ACP-binding region spans residues 250-254 (QANIR). Residue N279 is part of the active site.

This sequence belongs to the thiolase-like superfamily. FabH family. Homodimer.

Its subcellular location is the cytoplasm. The catalysed reaction is malonyl-[ACP] + acetyl-CoA + H(+) = 3-oxobutanoyl-[ACP] + CO2 + CoA. The protein operates within lipid metabolism; fatty acid biosynthesis. Its function is as follows. Catalyzes the condensation reaction of fatty acid synthesis by the addition to an acyl acceptor of two carbons from malonyl-ACP. Catalyzes the first condensation reaction which initiates fatty acid synthesis and may therefore play a role in governing the total rate of fatty acid production. Possesses both acetoacetyl-ACP synthase and acetyl transacylase activities. Its substrate specificity determines the biosynthesis of branched-chain and/or straight-chain of fatty acids. This is Beta-ketoacyl-[acyl-carrier-protein] synthase III from Streptococcus sanguinis (strain SK36).